Reading from the N-terminus, the 224-residue chain is Heme response regulator HssR (224 aa).

In terms of domain architecture, Response regulatory spans 3-116; sequence QCLVVDDDPR…ELIFRIRAVL (114 aa). The residue at position 52 (D52) is a 4-aspartylphosphate. Residues 124–222 constitute a DNA-binding region (ompR/PhoB-type); sequence NSEMTIGNLT…VRGQGYKVEN (99 aa).

Post-translationally, phosphorylated by HssS.

The protein resides in the cytoplasm. Functionally, member of the two-component regulatory system HssS/HssR involved in intracellular heme homeostasis and tempering of staphylococcal virulence. Phosphorylated HssR binds to a direct repeat sequence within hrtAB promoter and activates the expression of hrtAB, an efflux pump, in response to extracellular heme, hemin, hemoglobin or blood. The sequence is that of Heme response regulator HssR (hssR) from Staphylococcus aureus (strain MRSA252).